Reading from the N-terminus, the 369-residue chain is MVKLPAISKKPREIAKQKIIELAKKMYEDLMKGKRPKITMPIRSLSNAMFDKEKGSFTLVGKEKARTLTVNQAKIFAQTTKMLEFAKQLLETDDFSTLREAYYVSKNWGEARFDDQQASNNVIEDLEAALGVLREHLGFIPEEDGSSVVGPLKIIEETPEGELVVDCTKLGTGAYNIPNDVTKLNLETDADFILAIETSGMFARLNAERFWDKHNCILVSLKGVPARATRRFIKRLHEEHDLPVLVFTDGDPYGYLNIYRTLKVGSGKAIHLADKLSIPAARLIGVTPQDIIDYDLPTHPLKEQDIKRIKDGLKNDDFVRSFPEWQKALKQMLDMGVRAEQQSLAKYGLKYVVNTYLPEKIKDESTWLP.

Positions 10–146 (KPREIAKQKI…LGFIPEEDGS (137 aa)) constitute a Topo IIA-type catalytic domain. Tyrosine 103 (O-(5'-phospho-DNA)-tyrosine intermediate) is an active-site residue. The Mg(2+) site is built by glutamate 197 and aspartate 249.

The protein belongs to the TOP6A family. In terms of assembly, homodimer. Heterotetramer of two Top6A and two Top6B chains. Mg(2+) is required as a cofactor.

It carries out the reaction ATP-dependent breakage, passage and rejoining of double-stranded DNA.. Functionally, relaxes both positive and negative superturns and exhibits a strong decatenase activity. The sequence is that of Type 2 DNA topoisomerase 6 subunit A from Methanocaldococcus jannaschii (strain ATCC 43067 / DSM 2661 / JAL-1 / JCM 10045 / NBRC 100440) (Methanococcus jannaschii).